A 577-amino-acid polypeptide reads, in one-letter code: Zona pellucida sperm-binding protein 3 receptor (577 aa).

The first 32 residues, 1-32 (MTAWSLHELWKTSHSTLFQVTLATVLMAPVLG), serve as a signal peptide directing secretion. Sushi domains follow at residues 33 to 92 (DCGP…FCAR), 93 to 154 (KRCK…ECVI), 155 to 219 (ATCE…ACEK), 220 to 279 (IVCH…TCEP), 280 to 346 (NGCI…GCER), and 347 to 412 (VCCP…SCEA). Disulfide bonds link Cys-34/Cys-78, Cys-64/Cys-90, Cys-95/Cys-136, Cys-122/Cys-152, Cys-157/Cys-200, Cys-186/Cys-217, Cys-222/Cys-264, Cys-250/Cys-277, Cys-282/Cys-332, Cys-316/Cys-344, Cys-349/Cys-397, and Cys-382/Cys-410. 2 N-linked (GlcNAc...) asparagine glycosylation sites follow: Asn-72 and Asn-81. N-linked (GlcNAc...) asparagine glycosylation is found at Asn-144, Asn-195, and Asn-204. Asn-335 is a glycosylation site (N-linked (GlcNAc...) asparagine). N-linked (GlcNAc...) asparagine glycans are attached at residues Asn-426, Asn-431, Asn-434, Asn-443, Asn-462, Asn-475, and Asn-497. A Sushi 7 domain is found at 451–509 (AVCPKPEIINGNLSVEKEIYAEMENITIQCDSGYDLVGSSNIICLENRTWYPDIPFCIM). 2 cysteine pairs are disulfide-bonded: Cys-453–Cys-494 and Cys-480–Cys-507.

As to quaternary structure, homomultimer; disulfide-linked. In terms of processing, glycosylated. Testis specific.

It localises to the cytoplasmic vesicle. The protein localises to the secretory vesicle. Its subcellular location is the acrosome lumen. Its function is as follows. Binds to ZP3 glycoprotein in egg zona pellucida. Probably involved in interactions between sperm acrosome and egg zona pellucida during and immediately following the acrosome reaction. This is Zona pellucida sperm-binding protein 3 receptor (Zp3r) from Rattus norvegicus (Rat).